The following is a 509-amino-acid chain: Monocarboxylate transporter 9 (509 aa).

Over 1 to 12 (MELKKSPDGGWG) the chain is Cytoplasmic. 12 helical membrane-spanning segments follow: residues 13-33 (WVIV…PLAV), 53-73 (WVGS…SLCV), 80-100 (PVTI…SFAP), 102-122 (IYFL…LLYT), 137-157 (GLAL…YAAL), 164-184 (FYGL…ILAC), 305-325 (VFSA…PPSL), 342-362 (IMPL…LLGI), 372-392 (LYLY…IPFA), 398-418 (LALL…FPYV), 433-453 (GILM…VGWF), and 462-482 (IAFY…LLAA). The Cytoplasmic segment spans residues 483-509 (LPSWDTCNKQLPKPAPTTFLYKVASNV).

The protein belongs to the major facilitator superfamily. Monocarboxylate porter (TC 2.A.1.13) family.

It is found in the cell membrane. The enzyme catalyses creatine(in) = creatine(out). It catalyses the reaction (R)-carnitine(in) = (R)-carnitine(out). In terms of biological role, extracellular pH-and Na(+)-sensitive low-affinity creatine transporter. Also functions as a pH-independent carnitine efflux transporter. The chain is Monocarboxylate transporter 9 (SLC16A9) from Pongo abelii (Sumatran orangutan).